Consider the following 330-residue polypeptide: ADP-L-glycero-D-manno-heptose-6-epimerase (330 aa).

NADP(+) contacts are provided by residues 11–12 (FI), 32–33 (DN), lysine 39, lysine 54, 75–79 (EGACS), and asparagine 92. The Proton acceptor role is filled by tyrosine 139. An NADP(+)-binding site is contributed by lysine 143. Asparagine 168 is a substrate binding site. 2 residues coordinate NADP(+): valine 169 and lysine 177. Residue lysine 177 is the Proton acceptor of the active site. Substrate-binding positions include arginine 179, histidine 186, 200-203 (FGEY), arginine 213, and tyrosine 292.

Belongs to the NAD(P)-dependent epimerase/dehydratase family. HldD subfamily. In terms of assembly, homopentamer. The cofactor is NADP(+).

It carries out the reaction ADP-D-glycero-beta-D-manno-heptose = ADP-L-glycero-beta-D-manno-heptose. It participates in nucleotide-sugar biosynthesis; ADP-L-glycero-beta-D-manno-heptose biosynthesis; ADP-L-glycero-beta-D-manno-heptose from D-glycero-beta-D-manno-heptose 7-phosphate: step 4/4. Functionally, catalyzes the interconversion between ADP-D-glycero-beta-D-manno-heptose and ADP-L-glycero-beta-D-manno-heptose via an epimerization at carbon 6 of the heptose. The polypeptide is ADP-L-glycero-D-manno-heptose-6-epimerase (Burkholderia thailandensis (strain ATCC 700388 / DSM 13276 / CCUG 48851 / CIP 106301 / E264)).